Here is a 46-residue protein sequence, read N- to C-terminus: Bottromycin D (46 aa).

The propeptide occupies 10-46 (MTADFLNDDPNNAELSSLEMEELESWGAWSDDTDQSV).

In terms of processing, the precursor peptide is first ribosomally synthesized and then highly tailored by specific enzymes to yield the final natural product. These modifications include several methylations, cyclization and the formation of t-Leu and Thia-beta-Ala residues.

The protein localises to the secreted. In terms of biological role, bottromycin D is a ribosomally synthesized and post-translationally modified peptide (RiPP) that displays antibiotic activity against methicillin-resistant S.aureus (MRSA). This chain is Bottromycin D, found in Streptomyces sp.